We begin with the raw amino-acid sequence, 406 residues long: Serine/threonine transporter SstT (406 aa).

The next 9 helical transmembrane spans lie at 15–35 (LVIQILVGIILGISLALVSPS), 47–67 (FVGALKAIAPILVFILVAASI), 81–101 (IIVMYLAGTFFAALTAVVLSF), 140–160 (ALMSANYIGILAWGVGLGLAL), 191–211 (FGIFGLVASTFATTGFDALAG), 215–235 (LLVVLLSAMAIIALIVNPAMV), 289–309 (IPLGATINMAGAAITITTLTL), 315–335 (MGIEVDLMTALLLSVVAAVSA), and 362–382 (IAMQVVAVGFIIGVIQDSAET).

It belongs to the dicarboxylate/amino acid:cation symporter (DAACS) (TC 2.A.23) family.

The protein localises to the cell inner membrane. It catalyses the reaction L-serine(in) + Na(+)(in) = L-serine(out) + Na(+)(out). It carries out the reaction L-threonine(in) + Na(+)(in) = L-threonine(out) + Na(+)(out). In terms of biological role, involved in the import of serine and threonine into the cell, with the concomitant import of sodium (symport system). The polypeptide is Serine/threonine transporter SstT (Vibrio vulnificus (strain YJ016)).